A 528-amino-acid polypeptide reads, in one-letter code: Beta-hexosaminidase subunit alpha (528 aa).

The signal sequence occupies residues 1–22 (MAGCRLWVSLLLAAALACLATA). The propeptide occupies 23-88 (LWPWPQYIQT…PRPSFSKKQQ (66 aa)). Cys58 and Cys104 are oxidised to a cystine. 3 N-linked (GlcNAc...) asparagine glycosylation sites follow: Asn115, Asn157, and Asn295. A disulfide bridge links Cys277 with Cys328. The active-site Proton donor is Glu323. The interval 422 to 423 (NR) is critical for hydrolysis GM2 gangliosides. Residue Asn487 is glycosylated (N-linked (GlcNAc...) asparagine). Cys504 and Cys521 are disulfide-bonded.

This sequence belongs to the glycosyl hydrolase 20 family. There are 3 beta-hexosaminidase isozymes: isozyme A (hexosaminidase A) is a heterodimer composed of one subunit alpha and one subunit beta (chain A and B); isozyme B (hexosaminidase B) is a homodimer of two beta subunits (two chains A and B); isozyme S (hexosaminidase S) is a homodimer of two alpha subunits. The composition of the dimer (isozyme A versus isozyme S) has a significant effect on the substrate specificity of the alpha subunit active site.

The protein resides in the lysosome. The catalysed reaction is Hydrolysis of terminal non-reducing N-acetyl-D-hexosamine residues in N-acetyl-beta-D-hexosaminides.. It catalyses the reaction N-acetyl-beta-D-galactosaminyl-(1-&gt;4)-beta-D-3-sulfogalactosyl-(1-&gt;4)-beta-D-glucosyl-(1&lt;-&gt;1')-ceramide + H2O = a beta-D-3-sulfogalactosyl-(1-&gt;4)-beta-D-glucosyl-(1&lt;-&gt;1')-ceramide + N-acetyl-beta-D-galactosamine. The enzyme catalyses a ganglioside GM2 (d18:1(4E)) + H2O = a ganglioside GM3 (d18:1(4E)) + N-acetyl-beta-D-galactosamine. It carries out the reaction a ganglioside GM2 + H2O = a ganglioside GM3 + N-acetyl-beta-D-galactosamine. The catalysed reaction is beta-D-GalNAc-(1-&gt;4)-alpha-L-IdoA-(1-&gt;3)-beta-D-GalNAc-4-sulfate-(1-&gt;4)-alpha-L-IdoA-(1-&gt;3)-D-GalNAc-4-sulfate + H2O = alpha-L-IdoA-(1-&gt;3)-beta-D-GalNAc-4-sulfate-(1-&gt;4)-alpha-L-IdoA-(1-&gt;3)-D-GalNAc-4-sulfate + N-acetyl-D-galactosamine. It catalyses the reaction N-acetyl-beta-D-6-sulfogalactosaminyl-(1-&gt;4)-alpha-L-iduronyl-(1-&gt;3)-N-acetyl-D-6-sulfogalactosamine + H2O = alpha-L-iduronyl-(1-&gt;3)-N-acetyl-D-6-sulfogalactosamine + N-acetyl-D-6-sulfogalactosamine. With respect to regulation, addition of GM2A stimulates the hydrolysis of sulfated glycosphingolipid SM2 and the ganglioside GM2. Hydrolyzes the non-reducing end N-acetyl-D-hexosamine and/or sulfated N-acetyl-D-hexosamine of glycoconjugates, such as the oligosaccharide moieties from proteins and neutral glycolipids, or from certain mucopolysaccharides. The isozyme S is as active as the isozyme A on the anionic bis-sulfated glycans, the chondroitin-6-sulfate trisaccharide (C6S-3), and the dermatan sulfate pentasaccharide, and the sulfated glycosphingolipid SM2. The isozyme B does not hydrolyze each of these substrates, however hydrolyzes efficiently neutral oligosaccharide. Only the isozyme A is responsible for the degradation of GM2 gangliosides in the presence of GM2A. This chain is Beta-hexosaminidase subunit alpha, found in Rattus norvegicus (Rat).